A 353-amino-acid chain; its full sequence is Nicotinate-nucleotide--dimethylbenzimidazole phosphoribosyltransferase (353 aa).

The Proton acceptor role is filled by E318.

This sequence belongs to the CobT family.

The catalysed reaction is 5,6-dimethylbenzimidazole + nicotinate beta-D-ribonucleotide = alpha-ribazole 5'-phosphate + nicotinate + H(+). Its pathway is nucleoside biosynthesis; alpha-ribazole biosynthesis; alpha-ribazole from 5,6-dimethylbenzimidazole: step 1/2. Its function is as follows. Catalyzes the synthesis of alpha-ribazole-5'-phosphate from nicotinate mononucleotide (NAMN) and 5,6-dimethylbenzimidazole (DMB). The chain is Nicotinate-nucleotide--dimethylbenzimidazole phosphoribosyltransferase from Roseiflexus castenholzii (strain DSM 13941 / HLO8).